The primary structure comprises 221 residues: Ras-related protein Rab-27A (221 aa).

Position 2 is an N-acetylserine (serine 2). Position 2 is a phosphoserine (serine 2). Position 16–24 (16–24 (GDSGVGKTS)) interacts with GTP. The short motif at 38–46 (FITTVGIDF) is the Effector region element. GTP-binding positions include 74-78 (DTAGQ), 133-136 (NKSD), and 163-165 (SAA). Cysteine 123 and cysteine 188 form a disulfide bridge. Residues cysteine 219 and cysteine 221 are each lipidated (S-geranylgeranyl cysteine). Cysteine 221 bears the Cysteine methyl ester mark.

This sequence belongs to the small GTPase superfamily. Rab family. In terms of assembly, binds SYTL1, SLAC2B, MYRIP, SYTL3, SYTL4 and SYTL5. Interacts with RPH3A and RPH3A. Binds MLPH and SYTL2. Interacts with UNC13D. Does not interact with the BLOC-3 complex (heterodimer of HPS1 and HPS4). Interacts (GDP-bound form preferentially) with DENND10.

It localises to the membrane. Its subcellular location is the melanosome. It is found in the late endosome. The protein localises to the lysosome. The enzyme catalyses GTP + H2O = GDP + phosphate + H(+). Regulated by guanine nucleotide exchange factors (GEFs) which promote the exchange of bound GDP for free GTP, GTPase activating proteins (GAPs) which increase the GTP hydrolysis activity, and GDP dissociation inhibitors which inhibit the dissociation of the nucleotide from the GTPase. Activated by GEFs such as DENND10. Small GTPase which cycles between active GTP-bound and inactive GDP-bound states. In its active state, binds to a variety of effector proteins to regulate homeostasis of late endocytic pathway, including endosomal positioning, maturation and secretion. Plays a role in cytotoxic granule exocytosis in lymphocytes. Required for both granule maturation and granule docking and priming at the immunologic synapse. The chain is Ras-related protein Rab-27A (RAB27A) from Canis lupus familiaris (Dog).